A 292-amino-acid polypeptide reads, in one-letter code: ATP synthase subunit a (292 aa).

A run of 6 helical transmembrane segments spans residues 37 to 57, 96 to 116, 144 to 164, 192 to 212, 230 to 250, and 263 to 283; these read IDSV…FWLC, FIAP…AMDM, VVPT…LVLC, PVFA…EYVA, LVFM…SGVL, and AIFH…LALI.

The protein belongs to the ATPase A chain family. F-type ATPases have 2 components, CF(1) - the catalytic core - and CF(0) - the membrane proton channel. CF(1) has five subunits: alpha(3), beta(3), gamma(1), delta(1), epsilon(1). CF(0) has three main subunits: a(1), b(2) and c(9-12). The alpha and beta chains form an alternating ring which encloses part of the gamma chain. CF(1) is attached to CF(0) by a central stalk formed by the gamma and epsilon chains, while a peripheral stalk is formed by the delta and b chains.

Its subcellular location is the cell inner membrane. Key component of the proton channel; it plays a direct role in the translocation of protons across the membrane. The chain is ATP synthase subunit a from Paracidovorax citrulli (strain AAC00-1) (Acidovorax citrulli).